Here is a 270-residue protein sequence, read N- to C-terminus: Tetraspanin-17 (270 aa).

At 1–19 (MPGKHQQFQDPEVGCCGKY) the chain is on the cytoplasmic side. The chain crosses the membrane as a helical span at residues 20 to 40 (FLFGFNIVFWVLGALFLAIGL). At 41–63 (WAWGEKGVLSNISGLTDLGGLDP) the chain is on the extracellular side. N-linked (GlcNAc...) asparagine glycosylation occurs at Asn-51. A helical transmembrane segment spans residues 64–84 (VWLFVVIGGIMSVLGFAGCIG). Topologically, residues 85 to 94 (ALRENTFLLK) are cytoplasmic. The chain crosses the membrane as a helical span at residues 95 to 115 (FFSVFLGLIFFLELAAGILAF). At 116-234 (VFKDWIRDQL…GQFEKWLQDN (119 aa)) the chain is on the extracellular side. Intrachain disulfides connect Cys-155–Cys-223, Cys-156–Cys-188, Cys-172–Cys-182, and Cys-189–Cys-202. Asn-171 is a glycosylation site (N-linked (GlcNAc...) asparagine). The chain crosses the membrane as a helical span at residues 235 to 255 (LIVVAGVLVAIALLQICGICL). The Cytoplasmic portion of the chain corresponds to 256–270 (AQNLVSDIEAVKANW).

This sequence belongs to the tetraspanin (TM4SF) family. Interacts with ADAM10; the interaction influences ADAM10 substrate specificity, endocytosis and turnover.

The protein localises to the cell membrane. In terms of biological role, part of TspanC8 subgroup, composed of 6 members that interact with the transmembrane metalloprotease ADAM10. This interaction is required for ADAM10 exit from the endoplasmic reticulum and for enzymatic maturation and trafficking to the cell surface as well as substrate specificity. Different TspanC8/ADAM10 complexes have distinct substrates. Seems to regulate VE-cadherin expression in endothelial cells probably through interaction with ADAM10, promoting leukocyte transmigration. In Rattus norvegicus (Rat), this protein is Tetraspanin-17 (Tspan17).